A 143-amino-acid chain; its full sequence is NADH-quinone oxidoreductase subunit A (143 aa).

3 helical membrane passes run 8 to 28 (FGNVFAFLALGVVFVAGGYLT), 63 to 83 (FYVVALIFIIFDVEVVFLYPW), and 93 to 113 (FALIEALVFAGILVLGLAYAW).

The protein belongs to the complex I subunit 3 family. As to quaternary structure, NDH-1 is composed of 14 different subunits. Subunits NuoA, H, J, K, L, M, N constitute the membrane sector of the complex.

Its subcellular location is the cell inner membrane. The catalysed reaction is a quinone + NADH + 5 H(+)(in) = a quinol + NAD(+) + 4 H(+)(out). In terms of biological role, NDH-1 shuttles electrons from NADH, via FMN and iron-sulfur (Fe-S) centers, to quinones in the respiratory chain. The immediate electron acceptor for the enzyme in this species is believed to be a menaquinone. Couples the redox reaction to proton translocation (for every two electrons transferred, four hydrogen ions are translocated across the cytoplasmic membrane), and thus conserves the redox energy in a proton gradient. In Pelodictyon phaeoclathratiforme (strain DSM 5477 / BU-1), this protein is NADH-quinone oxidoreductase subunit A.